Reading from the N-terminus, the 397-residue chain is Enoyl-[acyl-carrier-protein] reductase [NADH] (397 aa).

NAD(+)-binding positions include 47–52 (GASTGY), 73–74 (LE), 110–111 (DA), and 138–139 (LA). Tyrosine 224 provides a ligand contact to substrate. Tyrosine 234 functions as the Proton donor in the catalytic mechanism. NAD(+)-binding positions include lysine 243 and 272–274 (LVT).

The protein belongs to the TER reductase family. As to quaternary structure, monomer.

The enzyme catalyses a 2,3-saturated acyl-[ACP] + NAD(+) = a (2E)-enoyl-[ACP] + NADH + H(+). Its pathway is lipid metabolism; fatty acid biosynthesis. Involved in the final reduction of the elongation cycle of fatty acid synthesis (FAS II). Catalyzes the reduction of a carbon-carbon double bond in an enoyl moiety that is covalently linked to an acyl carrier protein (ACP). The chain is Enoyl-[acyl-carrier-protein] reductase [NADH] from Methylobacillus flagellatus (strain ATCC 51484 / DSM 6875 / VKM B-1610 / KT).